The following is a 108-amino-acid chain: Large ribosomal subunit protein uL23 (108 aa).

This sequence belongs to the universal ribosomal protein uL23 family. As to quaternary structure, part of the 50S ribosomal subunit. Contacts protein L29, and trigger factor when it is bound to the ribosome.

Its function is as follows. One of the early assembly proteins it binds 23S rRNA. One of the proteins that surrounds the polypeptide exit tunnel on the outside of the ribosome. Forms the main docking site for trigger factor binding to the ribosome. In Polaromonas sp. (strain JS666 / ATCC BAA-500), this protein is Large ribosomal subunit protein uL23.